Here is a 188-residue protein sequence, read N- to C-terminus: Peptidyl-tRNA hydrolase (188 aa).

Position 15 (Tyr15) interacts with tRNA. His20 acts as the Proton acceptor in catalysis. 3 residues coordinate tRNA: Tyr64, Asn66, and Asn112.

This sequence belongs to the PTH family. As to quaternary structure, monomer.

The protein resides in the cytoplasm. The enzyme catalyses an N-acyl-L-alpha-aminoacyl-tRNA + H2O = an N-acyl-L-amino acid + a tRNA + H(+). In terms of biological role, hydrolyzes ribosome-free peptidyl-tRNAs (with 1 or more amino acids incorporated), which drop off the ribosome during protein synthesis, or as a result of ribosome stalling. Functionally, catalyzes the release of premature peptidyl moieties from peptidyl-tRNA molecules trapped in stalled 50S ribosomal subunits, and thus maintains levels of free tRNAs and 50S ribosomes. This is Peptidyl-tRNA hydrolase from Cytophaga hutchinsonii (strain ATCC 33406 / DSM 1761 / CIP 103989 / NBRC 15051 / NCIMB 9469 / D465).